The primary structure comprises 205 residues: MDKSKVSTAVGGETPVGLITGSRDDELESGSMRTAETVLRLVPMAFCISALVLMLKNSQTNDFGTLSYSDLGAFRYLVHANGICAGYSLLSAIIVAMPRPSTMSRAWTFFFLDQVLTYVILAAAAVSVEALYLARKGDIAITWSAACVSFGGFCHKAITSAVITFIVVVCYALLSLVSSYKLFSRYGAPDVSYPGKGIEVAAFHS.

Residues 1-25 (MDKSKVSTAVGGETPVGLITGSRDD) are disordered. Residues 1–34 (MDKSKVSTAVGGETPVGLITGSRDDELESGSMRT) lie on the Cytoplasmic side of the membrane. A helical transmembrane segment spans residues 35 to 55 (AETVLRLVPMAFCISALVLML). At 56–76 (KNSQTNDFGTLSYSDLGAFRY) the chain is on the extracellular side. A helical transmembrane segment spans residues 77-97 (LVHANGICAGYSLLSAIIVAM). Topologically, residues 98–105 (PRPSTMSR) are cytoplasmic. A helical transmembrane segment spans residues 106 to 126 (AWTFFFLDQVLTYVILAAAAV). The Extracellular segment spans residues 127–156 (SVEALYLARKGDIAITWSAACVSFGGFCHK). The helical transmembrane segment at 157–177 (AITSAVITFIVVVCYALLSLV) threads the bilayer. Topologically, residues 178 to 205 (SSYKLFSRYGAPDVSYPGKGIEVAAFHS) are cytoplasmic.

It belongs to the Casparian strip membrane proteins (CASP) family. As to quaternary structure, homodimer and heterodimers.

It is found in the cell membrane. This Ricinus communis (Castor bean) protein is CASP-like protein 2A1.